The following is a 368-amino-acid chain: MEKETSKKYEAAVAAFIKENKPKGTVVYDDLANQLATPYTLDAEAMEKLIQKVEDAGISVVDENGDPSEHSLKKDEKEAEKAQAEDLSAPTGVKINDPVRMYLKEIGRVQLLTAAEEVELALKIEEGDQEAKQRLAEANLRLVVSIAKRYVGRGMQFLDLIQEGNMGLMKAVEKFDYRKGFKFSTYATWWIRQAITRAIADQARTIRIPVHMVETINKLIRIQRQLLQDLGREPTPEEIGAEMDLPTEKVREILKIAQEPVSLETPIGEEDDSHLGDFIEDQDATSPAEHAAYELLKEQLEDVLDTLTDREENVLRLRFGLDDGRTRTLEEVGKVFGVTRERIRQIEAKALRKLRHPSRSKQLKDFLE.

Residues 60–86 (VVDENGDPSEHSLKKDEKEAEKAQAED) form a disordered region. Residues 67–84 (PSEHSLKKDEKEAEKAQA) are compositionally biased toward basic and acidic residues. Positions 135–205 (LAEANLRLVV…TRAIADQART (71 aa)) are sigma-70 factor domain-2. The Interaction with polymerase core subunit RpoC motif lies at 159–162 (DLIQ). A sigma-70 factor domain-3 region spans residues 214 to 290 (ETINKLIRIQ…DQDATSPAEH (77 aa)). The segment at 303–356 (VLDTLTDREENVLRLRFGLDDGRTRTLEEVGKVFGVTRERIRQIEAKALRKLRH) is sigma-70 factor domain-4. Positions 329-348 (LEEVGKVFGVTRERIRQIEA) form a DNA-binding region, H-T-H motif.

This sequence belongs to the sigma-70 factor family. RpoD/SigA subfamily. In terms of assembly, interacts transiently with the RNA polymerase catalytic core.

It localises to the cytoplasm. Its function is as follows. Sigma factors are initiation factors that promote the attachment of RNA polymerase to specific initiation sites and are then released. This sigma factor is the primary sigma factor during exponential growth. The polypeptide is RNA polymerase sigma factor SigA (Enterococcus faecalis (strain ATCC 700802 / V583)).